The chain runs to 391 residues: Ferrochelatase (391 aa).

2 residues coordinate Fe cation: histidine 196 and glutamate 281.

The protein belongs to the ferrochelatase family.

The protein localises to the cytoplasm. The enzyme catalyses heme b + 2 H(+) = protoporphyrin IX + Fe(2+). Its pathway is porphyrin-containing compound metabolism; protoheme biosynthesis; protoheme from protoporphyrin-IX: step 1/1. Its function is as follows. Catalyzes the ferrous insertion into protoporphyrin IX. The protein is Ferrochelatase of Prochlorococcus marinus (strain MIT 9211).